The chain runs to 92 residues: MDISTDNPDHGFQFPGTFELSAMGTAERGLETELPRLLAATGVELLQESVSWKHSSSGKYVSVKIGFRAQSREQFEAAHQALRDHPEVKWTL.

Belongs to the UPF0250 family.

This chain is UPF0250 protein XAC0666, found in Xanthomonas axonopodis pv. citri (strain 306).